We begin with the raw amino-acid sequence, 234 residues long: 2,3,4,5-tetrahydropyridine-2,6-dicarboxylate N-acetyltransferase (234 aa).

Belongs to the transferase hexapeptide repeat family. DapH subfamily.

It carries out the reaction (S)-2,3,4,5-tetrahydrodipicolinate + acetyl-CoA + H2O = L-2-acetamido-6-oxoheptanedioate + CoA. It functions in the pathway amino-acid biosynthesis; L-lysine biosynthesis via DAP pathway; LL-2,6-diaminopimelate from (S)-tetrahydrodipicolinate (acetylase route): step 1/3. Functionally, catalyzes the transfer of an acetyl group from acetyl-CoA to tetrahydrodipicolinate. This chain is 2,3,4,5-tetrahydropyridine-2,6-dicarboxylate N-acetyltransferase, found in Lacticaseibacillus casei (strain BL23) (Lactobacillus casei).